The chain runs to 135 residues: Large ribosomal subunit protein bL19 (135 aa).

It belongs to the bacterial ribosomal protein bL19 family.

In terms of biological role, this protein is located at the 30S-50S ribosomal subunit interface and may play a role in the structure and function of the aminoacyl-tRNA binding site. This is Large ribosomal subunit protein bL19 from Xanthomonas oryzae pv. oryzae (strain KACC10331 / KXO85).